We begin with the raw amino-acid sequence, 426 residues long: 3-phosphoshikimate 1-carboxyvinyltransferase (426 aa).

3-phosphoshikimate-binding residues include lysine 22, serine 23, and arginine 27. Position 22 (lysine 22) interacts with phosphoenolpyruvate. Glycine 96 and arginine 124 together coordinate phosphoenolpyruvate. Positions 170, 171, 172, 198, 314, 337, and 341 each coordinate 3-phosphoshikimate. Position 172 (glutamine 172) interacts with phosphoenolpyruvate. Catalysis depends on aspartate 314, which acts as the Proton acceptor. Arginine 345, arginine 387, and lysine 412 together coordinate phosphoenolpyruvate.

Belongs to the EPSP synthase family. In terms of assembly, monomer.

The protein resides in the cytoplasm. It carries out the reaction 3-phosphoshikimate + phosphoenolpyruvate = 5-O-(1-carboxyvinyl)-3-phosphoshikimate + phosphate. It functions in the pathway metabolic intermediate biosynthesis; chorismate biosynthesis; chorismate from D-erythrose 4-phosphate and phosphoenolpyruvate: step 6/7. Functionally, catalyzes the transfer of the enolpyruvyl moiety of phosphoenolpyruvate (PEP) to the 5-hydroxyl of shikimate-3-phosphate (S3P) to produce enolpyruvyl shikimate-3-phosphate and inorganic phosphate. The protein is 3-phosphoshikimate 1-carboxyvinyltransferase of Shewanella woodyi (strain ATCC 51908 / MS32).